A 293-amino-acid polypeptide reads, in one-letter code: 1D-myo-inositol 2-acetamido-2-deoxy-alpha-D-glucopyranoside deacetylase (293 aa).

Residues His-15, Asp-18, and His-148 each coordinate Zn(2+).

It belongs to the MshB deacetylase family. Zn(2+) is required as a cofactor.

It catalyses the reaction 1D-myo-inositol 2-acetamido-2-deoxy-alpha-D-glucopyranoside + H2O = 1D-myo-inositol 2-amino-2-deoxy-alpha-D-glucopyranoside + acetate. Functionally, catalyzes the deacetylation of 1D-myo-inositol 2-acetamido-2-deoxy-alpha-D-glucopyranoside (GlcNAc-Ins) in the mycothiol biosynthesis pathway. The protein is 1D-myo-inositol 2-acetamido-2-deoxy-alpha-D-glucopyranoside deacetylase of Corynebacterium diphtheriae (strain ATCC 700971 / NCTC 13129 / Biotype gravis).